The following is a 476-amino-acid chain: Bifunctional protein HldE (476 aa).

The tract at residues 1–320 (MQNPHIPSFA…RAVHQEGGSG (320 aa)) is ribokinase. 196–199 (NLSE) lines the ATP pocket. The active site involves Asp265. The cytidylyltransferase stretch occupies residues 345–476 (FTNGCFDIIH…KIVERIREKD (132 aa)).

It in the N-terminal section; belongs to the carbohydrate kinase PfkB family. This sequence in the C-terminal section; belongs to the cytidylyltransferase family. Homodimer.

It catalyses the reaction D-glycero-beta-D-manno-heptose 7-phosphate + ATP = D-glycero-beta-D-manno-heptose 1,7-bisphosphate + ADP + H(+). The enzyme catalyses D-glycero-beta-D-manno-heptose 1-phosphate + ATP + H(+) = ADP-D-glycero-beta-D-manno-heptose + diphosphate. It participates in nucleotide-sugar biosynthesis; ADP-L-glycero-beta-D-manno-heptose biosynthesis; ADP-L-glycero-beta-D-manno-heptose from D-glycero-beta-D-manno-heptose 7-phosphate: step 1/4. It functions in the pathway nucleotide-sugar biosynthesis; ADP-L-glycero-beta-D-manno-heptose biosynthesis; ADP-L-glycero-beta-D-manno-heptose from D-glycero-beta-D-manno-heptose 7-phosphate: step 3/4. Its function is as follows. Catalyzes the phosphorylation of D-glycero-D-manno-heptose 7-phosphate at the C-1 position to selectively form D-glycero-beta-D-manno-heptose-1,7-bisphosphate. In terms of biological role, catalyzes the ADP transfer from ATP to D-glycero-beta-D-manno-heptose 1-phosphate, yielding ADP-D-glycero-beta-D-manno-heptose. In Alcanivorax borkumensis (strain ATCC 700651 / DSM 11573 / NCIMB 13689 / SK2), this protein is Bifunctional protein HldE.